The primary structure comprises 443 residues: Diels-Alderase poxQ (443 aa).

The first 23 residues, 1 to 23 (MARIPLEFLSITLPVLLLAYCLA), serve as a signal peptide directing secretion. Residues asparagine 78, asparagine 97, and asparagine 145 are each glycosylated (N-linked (GlcNAc...) asparagine).

It belongs to the Diels-Alderase family.

It functions in the pathway secondary metabolite biosynthesis. In terms of biological role, diels-Alderase; part of the gene cluster that mediates the biosynthesis of oxaleimides, cytotoxic compounds containing an unusual disubstituted succinimide moiety. The first step of the pathway is provided by the HR-PKS poxF that serves in a new mode of collaborative biosynthesis with the PKS-NRPS poxE, by providing the olefin containing amino acid substrate via the synthesis of an ACP-bound dec-4-enoate. The cytochrome P450 monooxygenase poxM-catalyzed oxidation at the alpha-position creates the enzyme-bound 2-hydroxydec-4-enoyl-ACP thioester, which may be prone to spontaneous hydrolysis to yield 2-hydroxydec-4-enoic acid due to increased electrophilicity of the carbonyl. 2-hydroxydec-4-enoic acid can then be further oxidized by poxM to yield the alpha-ketoacid 2-oxodec-4-enoicacid, which is reductively aminated by the aminotransferase poxL to yield (S,E)-2-aminodec-4-enoic acid. The Hybrid PKS-NRPS synthetase poxE then performs condensation between the octaketide product of its PKS modules and the amino group of (S,E)-2-aminodec-4-enoic acid which is activated and incorporated by the adenylation domain. The resulting aminoacyl product can be cyclized by the Diels-Alderase PoxQ and reductively released by the reductive (R) domain of poxE to yield an aldehyde intermediate. The released aldehyde is then substrate for a Knoevenagel condensation by the hydrolyase poxO followed by an oxidation at the 5-position of the pyrrolidone ring. The presence of the olefin from the amino acid building block allows for migration of the substituted allyl group to occur. This allylic transposition reaction takes place in a conjugate addition, semipinacol-like fashion to yield a succinimide intermediate. Iterative two-electron oxidations of the C7 methyl of the succinimide intermediate to the carboxylic acid can be catalyzed by one of two remaining cytochrome P450 monooxygenasess poxC or poxD to yield oxaleimide A. Subsequent oxidation yields the maleimide scaffold oxaleimide I. Both oxaleimide A and oxaleimide I can undergo oxidative modifications in the decalin ring to yield the series of products oxaleimides B to H. The chain is Diels-Alderase poxQ from Penicillium oxalicum (strain 114-2 / CGMCC 5302) (Penicillium decumbens).